The primary structure comprises 398 residues: S-adenosylmethionine synthase (398 aa).

An ATP-binding site is contributed by 136–141 (GTGSSD).

Belongs to the AdoMet synthase 2 family. Mg(2+) serves as cofactor.

The enzyme catalyses L-methionine + ATP + H2O = S-adenosyl-L-methionine + phosphate + diphosphate. It participates in amino-acid biosynthesis; S-adenosyl-L-methionine biosynthesis; S-adenosyl-L-methionine from L-methionine: step 1/1. Its function is as follows. Catalyzes the formation of S-adenosylmethionine from methionine and ATP. In Methanosarcina mazei (strain ATCC BAA-159 / DSM 3647 / Goe1 / Go1 / JCM 11833 / OCM 88) (Methanosarcina frisia), this protein is S-adenosylmethionine synthase.